The sequence spans 90 residues: uncharacterized protein (90 aa).

The helical transmembrane segment at 32-52 (IIINLIPLVLLFAFFCPCIYF) threads the bilayer.

The protein resides in the membrane. This is an uncharacterized protein from Schizosaccharomyces pombe (strain 972 / ATCC 24843) (Fission yeast).